The chain runs to 128 residues: Azurin (128 aa).

The Plastocyanin-like domain maps to 1-128 (ACDVSIEGND…IMKGTIELGS (128 aa)). Cys-2 and Cys-25 are oxidised to a cystine. Residues His-45, Cys-111, His-116, and Met-120 each coordinate Cu cation.

Monomer. Interacts with the AAUA/AAUB heterotetramer complex. Cu cation is required as a cofactor.

The protein localises to the periplasm. Functionally, transfers electrons from cytochrome c551 to cytochrome oxidase. Transfers electrons from the tryptophan tryptophylquinone of the aromatic amine dehydrogenase heterotetramer. The protein is Azurin of Alcaligenes faecalis.